We begin with the raw amino-acid sequence, 1101 residues long: Lysylphosphatidylglycerol biosynthesis bifunctional protein LysX (1101 aa).

The segment at 1–601 (MTATRLVRAH…RLHSDGTAPD (601 aa)) is phosphatidylglycerol lysyltransferase. The next 7 membrane-spanning stretches (helical) occupy residues 18-38 (VPAA…LASV), 60-80 (FPDT…ALAA), 84-104 (IAWW…VTGL), 113-133 (DVGE…LLLA), 151-171 (VTLV…LELF), 183-200 (YALN…GAFS), and 207-227 (VNAL…VVLF). The lysine--tRNA ligase stretch occupies residues 602 to 1101 (RIGPVGDGAD…TLPFPLAKPR (500 aa)). Positions 662–740 (VTVSGRVLRA…SVLVTRWRLI (79 aa)) form a DNA-binding region, OB. Asp-1013 and Glu-1020 together coordinate Mg(2+).

The protein in the N-terminal section; belongs to the LPG synthetase family. It in the C-terminal section; belongs to the class-II aminoacyl-tRNA synthetase family. Requires Mg(2+) as cofactor.

It localises to the cell membrane. It carries out the reaction tRNA(Lys) + L-lysine + ATP = L-lysyl-tRNA(Lys) + AMP + diphosphate. The catalysed reaction is L-lysyl-tRNA(Lys) + a 1,2-diacyl-sn-glycero-3-phospho-(1'-sn-glycerol) = a 1,2-diacyl-sn-glycero-3-phospho-1'-(3'-O-L-lysyl)-sn-glycerol + tRNA(Lys). Catalyzes the production of L-lysyl-tRNA(Lys)transfer and the transfer of a lysyl group from L-lysyl-tRNA(Lys) to membrane-bound phosphatidylglycerol (PG), which produces lysylphosphatidylglycerol (LPG), one of the components of the bacterial membrane with a positive net charge. LPG synthesis contributes to the resistance to cationic antimicrobial peptides (CAMPs) and likely protects M.tuberculosis against the CAMPs produced by competiting microorganisms (bacteriocins). In fact, the modification of anionic phosphatidylglycerol with positively charged L-lysine results in repulsion of the peptides. In Mycolicibacterium gilvum (strain PYR-GCK) (Mycobacterium gilvum (strain PYR-GCK)), this protein is Lysylphosphatidylglycerol biosynthesis bifunctional protein LysX (lysX).